Here is a 308-residue protein sequence, read N- to C-terminus: Aspartate carbamoyltransferase catalytic subunit (308 aa).

2 residues coordinate carbamoyl phosphate: Arg-55 and Thr-56. Residue Lys-84 coordinates L-aspartate. Arg-105, His-133, and Gln-136 together coordinate carbamoyl phosphate. 2 residues coordinate L-aspartate: Arg-167 and Arg-228. Carbamoyl phosphate is bound by residues Leu-267 and Pro-268.

Belongs to the aspartate/ornithine carbamoyltransferase superfamily. ATCase family. As to quaternary structure, heterooligomer of catalytic and regulatory chains.

It carries out the reaction carbamoyl phosphate + L-aspartate = N-carbamoyl-L-aspartate + phosphate + H(+). It participates in pyrimidine metabolism; UMP biosynthesis via de novo pathway; (S)-dihydroorotate from bicarbonate: step 2/3. Functionally, catalyzes the condensation of carbamoyl phosphate and aspartate to form carbamoyl aspartate and inorganic phosphate, the committed step in the de novo pyrimidine nucleotide biosynthesis pathway. The chain is Aspartate carbamoyltransferase catalytic subunit from Methanocella arvoryzae (strain DSM 22066 / NBRC 105507 / MRE50).